Here is a 55-residue protein sequence, read N- to C-terminus: Riparin-1.5 acid (55 aa).

The signal sequence occupies residues 1 to 15 (MKIIVFLAVLMLVSA). A propeptide spanning residues 16 to 41 (QVCLVSAAEMEHSSDNELSSRDLVKR) is cleaved from the precursor. A disulfide bond links C47 and C53. A propeptide spanning residues 54–55 (NH) is cleaved from the precursor.

As to expression, expressed by the skin glands.

The protein resides in the secreted. The sequence is that of Riparin-1.5 acid from Crinia riparia (Streambank froglet).